Consider the following 238-residue polypeptide: Beta-glucanase (238 aa).

An N-terminal signal peptide occupies residues 1–26; the sequence is MMKKKSWFTLMITGVISLFFSVSAFA. One can recognise a GH16 domain in the interval 29–238; the sequence is VFWEPLSYFN…EYDWVKYTSN (210 aa). Cys56 and Cys85 are joined by a disulfide. Glu129 (nucleophile) is an active-site residue. Glu133 serves as the catalytic Proton donor.

This sequence belongs to the glycosyl hydrolase 16 family.

The enzyme catalyses Hydrolysis of (1-&gt;4)-beta-D-glucosidic linkages in beta-D-glucans containing (1-&gt;3)- and (1-&gt;4)-bonds.. In Paenibacillus polymyxa (Bacillus polymyxa), this protein is Beta-glucanase (gluB).